We begin with the raw amino-acid sequence, 588 residues long: Cryptochrome-1 (588 aa).

The Photolyase/cryptochrome alpha/beta domain occupies 3–132 (VNAVHWFRKG…EVIVRISHTL (130 aa)). Lys-11 participates in a covalent cross-link: Glycyl lysine isopeptide (Lys-Gly) (interchain with G-Cter in ubiquitin). The short motif at 50–54 (NRWRF) is the LIR 1 element. Ser-71 carries the phosphoserine; by AMPK modification. The LIR 2 signature appears at 82-87 (DVFPRL). A Glycyl lysine isopeptide (Lys-Gly) (interchain with G-Cter in ubiquitin) cross-link involves residue Lys-107. The short motif at 151–156 (KRFQTL) is the LIR 3 element. Lys-159 participates in a covalent cross-link: Glycyl lysine isopeptide (Lys-Gly) (interchain with G-Cter in ubiquitin). The residue at position 247 (Ser-247) is a Phosphoserine; by MAPK. Residue Ser-252 participates in FAD binding. 2 consecutive short sequence motifs (LIR) follow at residues 255–260 (LRFGCL) and 271–276 (DLYKKV). Ser-280 is modified (phosphoserine; by AMPK). Positions 285–290 (SLYGQL) match the LIR 6 motif. Gln-289 serves as a coordination point for FAD. Residue Lys-329 forms a Glycyl lysine isopeptide (Lys-Gly) (interchain with G-Cter in ubiquitin) linkage. The short motif at 335–339 (TGFPW) is the LIR 7 element. His-355 contacts FAD. Positions 371-470 (WISWEEGMKV…LIGVNYPKPM (100 aa)) are required for inhibition of CLOCK-BMAL1-mediated transcription. The short motif at 379 to 384 (KVFEEL) is the LIR 8 element. 387 to 389 (DAD) contacts FAD. Short sequence motifs (LIR) lie at residues 395-400 (GSWMWL), 411-416 (HCYCPV), and 430-435 (RRYLPV). Positions 471-493 (VNHAEASRLNIERMKQIYQQLSR) are interaction with TIMELESS. Lys-485 participates in a covalent cross-link: Glycyl lysine isopeptide (Lys-Gly) (interchain with G-Cter in ubiquitin). 2 consecutive short sequence motifs (LIR) follow at residues 486 to 491 (QIYQQL) and 492 to 497 (SRYRGL). Positions 511-588 (GGLMGYAPGE…GPKVQRQSSN (78 aa)) are disordered. The span at 545-568 (DSQQTNPLKQGRSSMGTGLSSGKR) shows a compositional bias: polar residues. Lys-567 participates in a covalent cross-link: Glycyl lysine isopeptide (Lys-Gly) (interchain with G-Cter in ubiquitin). Ser-570 carries the phosphoserine modification.

Belongs to the DNA photolyase class-1 family. Component of the circadian core oscillator, which includes the CRY proteins, CLOCK or NPAS2, BMAL1 or BMAL2, CSNK1D and/or CSNK1E, TIMELESS, and the PER proteins. Interacts directly with TIMELESS. Interacts directly with PER1, PER2 and PER3; interaction with PER2 inhibits its ubiquitination and vice versa. Interacts with FBXL21. Interacts with FBXL3. Interacts with CLOCK-BMAL1 independently of PER2 and DNA. Interacts with HDAC1, HDAC2 and SIN3B. Interacts with nuclear receptors AR, NR1D1, NR3C1/GR, RORA and RORC; the interaction with at least NR3C1/GR is ligand dependent. Interacts with PRKDC. Interacts with the G protein subunit alpha GNAS; the interaction may block GPCR-mediated regulation of cAMP concentrations. Interacts with PRMT5. Interacts with EZH2. Interacts with MYBBP1A, DOCK7, HNRNPU, RPL7A, RPL8 and RPS3. Interacts with PPP5C (via TPR repeats). Interacts with MAP1LC3B. Interacts with CLOCK. Interacts with BMAL1. Interacts weakly with HDAC3; this interaction is enhanced in the presence of FBXL3. Interacts with TRIM28, KCTD5 and DDB1. Interacts with FOXO1. Interacts with DTL and DDB1-CUL4A complex. Interacts with HNF4A. Interacts with PSMD2 in a KDM8-dependent manner. Interacts with KDM8 in a FBXL3-dependent manner. Interacts with PPARG in a ligand-dependent manner. Interacts with PPARD (via domain NR LBD) and NR1I2 (via domain NR LBD) in a ligand-dependent manner. Interacts with PPARA, NR1I3 and VDR. FAD is required as a cofactor. The cofactor is (6R)-5,10-methylene-5,6,7,8-tetrahydrofolate. Post-translationally, phosphorylation on Ser-247 by MAPK is important for the inhibition of CLOCK-BMAL1-mediated transcriptional activity. Phosphorylation by CSNK1E requires interaction with PER1 or PER2. Phosphorylation at Ser-71 and Ser-280 by AMPK decreases protein stability. Phosphorylation at Ser-570 exhibits a robust circadian rhythm with a peak at CT8, increases protein stability, prevents SCF(FBXL3)-mediated degradation and is antagonized by interaction with PRKDC. In terms of processing, ubiquitinated by the SCF(FBXL3) and SCF(FBXL21) complexes, regulating the balance between degradation and stabilization. The SCF(FBXL3) complex is mainly nuclear and mediates ubiquitination and subsequent degradation of CRY1. In contrast, cytoplasmic SCF(FBXL21) complex-mediated ubiquitination leads to stabilize CRY1 and counteract the activity of the SCF(FBXL3) complex. The SCF(FBXL3) and SCF(FBXL21) complexes probably mediate ubiquitination at different Lys residues. Ubiquitination at Lys-11 and Lys-107 are specifically ubiquitinated by the SCF(FBXL21) complex but not by the SCF(FBXL3) complex. Ubiquitination may be inhibited by PER2. Deubiquitinated by USP7. Undergoes autophagy-mediated degradation in the liver in a time-dependent manner. Autophagic degradation of CRY1 (an inhibitor of gluconeogenesis) occurs during periods of reduced feeding allowing induction of gluconeogenesis and maintenance of blood glucose levels.

It localises to the cytoplasm. The protein resides in the nucleus. Functionally, transcriptional repressor which forms a core component of the circadian clock. The circadian clock, an internal time-keeping system, regulates various physiological processes through the generation of approximately 24 hour circadian rhythms in gene expression, which are translated into rhythms in metabolism and behavior. It is derived from the Latin roots 'circa' (about) and 'diem' (day) and acts as an important regulator of a wide array of physiological functions including metabolism, sleep, body temperature, blood pressure, endocrine, immune, cardiovascular, and renal function. Consists of two major components: the central clock, residing in the suprachiasmatic nucleus (SCN) of the brain, and the peripheral clocks that are present in nearly every tissue and organ system. Both the central and peripheral clocks can be reset by environmental cues, also known as Zeitgebers (German for 'timegivers'). The predominant Zeitgeber for the central clock is light, which is sensed by retina and signals directly to the SCN. The central clock entrains the peripheral clocks through neuronal and hormonal signals, body temperature and feeding-related cues, aligning all clocks with the external light/dark cycle. Circadian rhythms allow an organism to achieve temporal homeostasis with its environment at the molecular level by regulating gene expression to create a peak of protein expression once every 24 hours to control when a particular physiological process is most active with respect to the solar day. Transcription and translation of core clock components (CLOCK, NPAS2, BMAL1, BMAL2, PER1, PER2, PER3, CRY1 and CRY2) plays a critical role in rhythm generation, whereas delays imposed by post-translational modifications (PTMs) are important for determining the period (tau) of the rhythms (tau refers to the period of a rhythm and is the length, in time, of one complete cycle). A diurnal rhythm is synchronized with the day/night cycle, while the ultradian and infradian rhythms have a period shorter and longer than 24 hours, respectively. Disruptions in the circadian rhythms contribute to the pathology of cardiovascular diseases, cancer, metabolic syndromes and aging. A transcription/translation feedback loop (TTFL) forms the core of the molecular circadian clock mechanism. Transcription factors, CLOCK or NPAS2 and BMAL1 or BMAL2, form the positive limb of the feedback loop, act in the form of a heterodimer and activate the transcription of core clock genes and clock-controlled genes (involved in key metabolic processes), harboring E-box elements (5'-CACGTG-3') within their promoters. The core clock genes: PER1/2/3 and CRY1/2 which are transcriptional repressors form the negative limb of the feedback loop and interact with the CLOCK|NPAS2-BMAL1|BMAL2 heterodimer inhibiting its activity and thereby negatively regulating their own expression. This heterodimer also activates nuclear receptors NR1D1/2 and RORA/B/G, which form a second feedback loop and which activate and repress BMAL1 transcription, respectively. CRY1 and CRY2 have redundant functions but also differential and selective contributions at least in defining the pace of the SCN circadian clock and its circadian transcriptional outputs. More potent transcriptional repressor in cerebellum and liver than CRY2, though more effective in lengthening the period of the SCN oscillator. On its side, CRY2 seems to play a critical role in tuning SCN circadian period by opposing the action of CRY1. With CRY2, is dispensable for circadian rhythm generation but necessary for the development of intercellular networks for rhythm synchrony. Capable of translocating circadian clock core proteins such as PER proteins to the nucleus. Interacts with CLOCK-BMAL1 independently of PER proteins and is found at CLOCK-BMAL1-bound sites, suggesting that CRY may act as a molecular gatekeeper to maintain CLOCK-BMAL1 in a poised and repressed state until the proper time for transcriptional activation. Represses the CLOCK-BMAL1 induced transcription of BHLHE40/DEC1, ATF4, MTA1, KLF10 and NAMPT. May repress circadian target genes expression in collaboration with HDAC1 and HDAC2 through histone deacetylation. Mediates the clock-control activation of ATR and modulates ATR-mediated DNA damage checkpoint. In liver, mediates circadian regulation of cAMP signaling and gluconeogenesis by binding to membrane-coupled G proteins and blocking glucagon-mediated increases in intracellular cAMP concentrations and CREB1 phosphorylation. Inhibits hepatic gluconeogenesis by decreasing nuclear FOXO1 levels that down-regulates gluconeogenic gene expression. Besides its role in the maintenance of the circadian clock, is also involved in the regulation of other processes. Represses glucocorticoid receptor NR3C1/GR-induced transcriptional activity by binding to glucocorticoid response elements (GREs). Plays a key role in glucose and lipid metabolism modulation, in part, through the transcriptional regulation of genes involved in these pathways, such as LEP or ACSL4. Represses PPARD and its target genes in the skeletal muscle and limits exercise capacity. Plays an essential role in the generation of circadian rhythms in the retina. Represses the transcriptional activity of NR1I2. This chain is Cryptochrome-1 (Cry1), found in Rattus norvegicus (Rat).